Reading from the N-terminus, the 276-residue chain is NADPH-dependent 7-cyano-7-deazaguanine reductase (276 aa).

Residue 83-85 participates in substrate binding; that stretch reads IES. 85-86 serves as a coordination point for NADPH; that stretch reads SK. Cys-184 serves as the catalytic Thioimide intermediate. The active-site Proton donor is the Asp-191. A substrate-binding site is contributed by 223-224; sequence HE. An NADPH-binding site is contributed by 252–253; sequence RG.

It belongs to the GTP cyclohydrolase I family. QueF type 2 subfamily. In terms of assembly, homodimer.

It localises to the cytoplasm. The catalysed reaction is 7-aminomethyl-7-carbaguanine + 2 NADP(+) = 7-cyano-7-deazaguanine + 2 NADPH + 3 H(+). It participates in tRNA modification; tRNA-queuosine biosynthesis. In terms of biological role, catalyzes the NADPH-dependent reduction of 7-cyano-7-deazaguanine (preQ0) to 7-aminomethyl-7-deazaguanine (preQ1). This chain is NADPH-dependent 7-cyano-7-deazaguanine reductase, found in Pseudomonas aeruginosa (strain LESB58).